The chain runs to 209 residues: Geminin (209 aa).

The disordered stretch occupies residues M1 to G79. Residues Q7–I16 are compositionally biased toward basic and acidic residues. N6-acetyllysine is present on K27. Residues S34, S36, S49, S63, and S64 each carry the phosphoserine modification. Positions T82–E161 are necessary and sufficient for interaction with IDAS and CDT1. The stretch at P94–V144 forms a coiled coil. Positions D164–I209 are disordered. The segment at D170–E190 is homeodomain binding. Positions D170 to E190 are enriched in acidic residues. S184 bears the Phosphoserine; by CK2 mark. Residues T198–I209 are compositionally biased toward polar residues.

This sequence belongs to the geminin family. As to quaternary structure, homotetramer. Interacts with CDT1; this inhibits binding of the MCM complex to origins of replication. The complex with CDT1 exists in two forms, a 'permissive' heterotrimer and an 'inhibitory' heterohexamer. Interacts (via coiled-coil domain) with IDAS (via coiled-coil domain); this targets GMNN to the nucleus. The heterodimer formed by GMNN and MCIDAS has much lower affinity for CDT1 than the GMNN homodimer. Interacts with a subset of Hox proteins, affinity increasing from anterior to posterior types, the strongest interaction being with HOXB1, HOXC9 and HOXD10. Interacts with LRWD1 from G1/S to mitosis. Phosphorylated during mitosis. Phosphorylation at Ser-184 by CK2 results in enhanced binding to Hox proteins and more potent inhibitory effect on Hox transcriptional activity.

The protein resides in the cytoplasm. Its subcellular location is the nucleus. Its function is as follows. Inhibits DNA replication by preventing the incorporation of MCM complex into pre-replication complex (pre-RC). It is degraded during the mitotic phase of the cell cycle. Its destruction at the metaphase-anaphase transition permits replication in the succeeding cell cycle. Inhibits histone acetyltransferase activity of KAT7/HBO1 in a CDT1-dependent manner, inhibiting histone H4 acetylation and DNA replication licensing. Inhibits the transcriptional activity of a subset of Hox proteins, enrolling them in cell proliferative control. The chain is Geminin (GMNN) from Homo sapiens (Human).